A 186-amino-acid polypeptide reads, in one-letter code: Fucolectin-6 (186 aa).

The signal sequence occupies residues 1–32; the sequence is MKTCNLTDRMKVKMIMLLFQILAISTLQSVSA. The F5/8 type C-like stretch occupies residues 40–186; that stretch reads QENVAVRGKA…VEVNAMLPAN (147 aa). Ca(2+) is bound by residues Asn67, Asp70, Asn72, and Ser81. 3 disulfides stabilise this stretch: Cys82–Cys175, Cys114–Cys115, and Cys137–Cys153. His84 and Arg111 together coordinate alpha-L-fucose. Positions 111–113 match the Cell attachment site motif; sequence RGD. An alpha-L-fucose-binding site is contributed by Arg118. Residues Cys175 and Glu176 each contribute to the Ca(2+) site.

Belongs to the fucolectin family. In terms of assembly, homotrimer. As to expression, gill mucous cells.

It localises to the secreted. Functionally, acts as a defensive agent. Recognizes blood group fucosylated oligosaccharides including A, B, H and Lewis B-type antigens. Does not recognize Lewis A antigen and has low affinity for monovalent haptens. In Anguilla japonica (Japanese eel), this protein is Fucolectin-6.